Here is a 351-residue protein sequence, read N- to C-terminus: Large ribosomal subunit protein uL3 (351 aa).

Disordered stretches follow at residues 1-31 (MGHRKLASPRRGSAGLRPRKRSSELLPTPRT) and 246-271 (KGSRKIGTRGPSLGTPSYTPQPGQLG).

The protein belongs to the universal ribosomal protein uL3 family. In terms of assembly, part of the 50S ribosomal subunit. Forms a cluster with proteins L14 and L24e.

Functionally, one of the primary rRNA binding proteins, it binds directly near the 3'-end of the 23S rRNA, where it nucleates assembly of the 50S subunit. In Saccharolobus islandicus (strain M.14.25 / Kamchatka #1) (Sulfolobus islandicus), this protein is Large ribosomal subunit protein uL3.